A 122-amino-acid polypeptide reads, in one-letter code: Large ribosomal subunit protein uL14 (122 aa).

It belongs to the universal ribosomal protein uL14 family. Part of the 50S ribosomal subunit. Forms a cluster with proteins L3 and L19. In the 70S ribosome, L14 and L19 interact and together make contacts with the 16S rRNA in bridges B5 and B8.

In terms of biological role, binds to 23S rRNA. Forms part of two intersubunit bridges in the 70S ribosome. The chain is Large ribosomal subunit protein uL14 from Paracoccus denitrificans (strain Pd 1222).